Here is a 600-residue protein sequence, read N- to C-terminus: Glutamine--fructose-6-phosphate aminotransferase [isomerizing] (600 aa).

Cysteine 2 serves as the catalytic Nucleophile; for GATase activity. Residues 2–217 (CGIVGYIGQL…DKEMVIVTDK (216 aa)) form the Glutamine amidotransferase type-2 domain. SIS domains lie at 283–422 (ISNA…SRGK) and 452–590 (IARE…VDKP). Lysine 595 serves as the catalytic For Fru-6P isomerization activity.

In terms of assembly, homodimer.

It localises to the cytoplasm. The enzyme catalyses D-fructose 6-phosphate + L-glutamine = D-glucosamine 6-phosphate + L-glutamate. Catalyzes the first step in hexosamine metabolism, converting fructose-6P into glucosamine-6P using glutamine as a nitrogen source. The chain is Glutamine--fructose-6-phosphate aminotransferase [isomerizing] from Bacillus licheniformis (strain ATCC 14580 / DSM 13 / JCM 2505 / CCUG 7422 / NBRC 12200 / NCIMB 9375 / NCTC 10341 / NRRL NRS-1264 / Gibson 46).